We begin with the raw amino-acid sequence, 160 residues long: Small ribosomal subunit protein uS9 (160 aa).

The protein belongs to the universal ribosomal protein uS9 family.

The sequence is that of Small ribosomal subunit protein uS9 from Bradyrhizobium sp. (strain ORS 278).